A 200-amino-acid chain; its full sequence is NAD(P)H dehydrogenase (quinone) (200 aa).

The Flavodoxin-like domain maps to 4–191; the sequence is VLVLYYSSYG…DIARYQGKHV (188 aa). Residues 10–15 and 79–81 each bind FMN; these read SSYGHV and TRF. Tyrosine 12 contacts NAD(+). Tryptophan 99 contacts substrate. FMN is bound by residues 114 to 120 and histidine 135; that span reads STGTQHG.

Belongs to the WrbA family. Requires FMN as cofactor.

It carries out the reaction a quinone + NADH + H(+) = a quinol + NAD(+). The catalysed reaction is a quinone + NADPH + H(+) = a quinol + NADP(+). This is NAD(P)H dehydrogenase (quinone) from Burkholderia vietnamiensis (strain G4 / LMG 22486) (Burkholderia cepacia (strain R1808)).